Consider the following 926-residue polypeptide: Bifunctional uridylyltransferase/uridylyl-removing enzyme (926 aa).

Residues 1-379 (MPVSFLSLAS…PKSRRSGASK (379 aa)) form a uridylyltransferase region. Positions 380–736 (QIDGFPVIQG…GHEMPAYDAT (357 aa)) are uridylyl-removing. The 123-residue stretch at 496–618 (VDEHAIRALD…VKSPERLRLL (123 aa)) folds into the HD domain. ACT domains follow at residues 737-814 (MISL…IRSS) and 849-926 (VIEV…ISEK).

The protein belongs to the GlnD family. It depends on Mg(2+) as a cofactor.

It carries out the reaction [protein-PII]-L-tyrosine + UTP = [protein-PII]-uridylyl-L-tyrosine + diphosphate. It catalyses the reaction [protein-PII]-uridylyl-L-tyrosine + H2O = [protein-PII]-L-tyrosine + UMP + H(+). With respect to regulation, uridylyltransferase (UTase) activity is inhibited by glutamine, while glutamine activates uridylyl-removing (UR) activity. In terms of biological role, modifies, by uridylylation and deuridylylation, the PII regulatory proteins (GlnB and homologs), in response to the nitrogen status of the cell that GlnD senses through the glutamine level. Under low glutamine levels, catalyzes the conversion of the PII proteins and UTP to PII-UMP and PPi, while under higher glutamine levels, GlnD hydrolyzes PII-UMP to PII and UMP (deuridylylation). Thus, controls uridylylation state and activity of the PII proteins, and plays an important role in the regulation of nitrogen assimilation and metabolism. The sequence is that of Bifunctional uridylyltransferase/uridylyl-removing enzyme from Zymomonas mobilis subsp. mobilis (strain ATCC 31821 / ZM4 / CP4).